The chain runs to 115 residues: Immunoglobulin kappa chain variable 12-41 (115 aa).

The signal sequence occupies residues 1-20 (MSVLTQVLALLLLWLTGARC). Positions 21–43 (DIQMTQSPASLSASVGETVTITC) are framework-1. A disulfide bridge connects residues cysteine 43 and cysteine 108. The tract at residues 44-54 (RASGNIHNYLA) is complementarity-determining-1. The tract at residues 55 to 69 (WYQQKQGKSPQLLVY) is framework-2. The interval 70–76 (NAKTLAD) is complementarity-determining-2. The interval 77-108 (GVPSRFSGSGSGTQYSLKINSLQPEDFGSYYC) is framework-3. The interval 109–115 (QHFWSTP) is complementarity-determining-3.

The polypeptide is Immunoglobulin kappa chain variable 12-41 (Mus musculus (Mouse)).